We begin with the raw amino-acid sequence, 155 residues long: Large ribosomal subunit protein uL13 (155 aa).

It belongs to the universal ribosomal protein uL13 family. Part of the 50S ribosomal subunit.

This protein is one of the early assembly proteins of the 50S ribosomal subunit, although it is not seen to bind rRNA by itself. It is important during the early stages of 50S assembly. This Rickettsia felis (strain ATCC VR-1525 / URRWXCal2) (Rickettsia azadi) protein is Large ribosomal subunit protein uL13.